Reading from the N-terminus, the 146-residue chain is Large ribosomal subunit protein uL24 (146 aa).

The segment at 1 to 33 (MKYNPRVTSSRRRNRKPHFTASSSERRVXMSSP) is disordered. Residues 9 to 18 (SSRRRNRKPH) show a composition bias toward basic residues.

This sequence belongs to the universal ribosomal protein uL24 family.

The protein is Large ribosomal subunit protein uL24 (RPL26) of Brassica campestris (Field mustard).